The chain runs to 283 residues: Protein ATAF2 (283 aa).

The NAC domain maps to 7–159 (LPAGFRFHPT…DWVLCRIYNK (153 aa)). A DNA-binding region spans residues 103–165 (LGIKKALVFY…IYNKKGTMEK (63 aa)). The disordered stretch occupies residues 171–211 (EKPRTTTMAEQSSSPFDTSDSTYPTLQEDDSSSSGGHGHVV). Positions 175–195 (TTTMAEQSSSPFDTSDSTYPT) are enriched in polar residues.

Homodimer. Interacts with AHK2. Interacts with AHL12 and AHL27. Interacts with the helicase domain of the tobamovirus (TMV) replicase. Expressed in roots, cotyledons, rosette leaves, cauline leaves and mature flowers. Expressed at low levels in stems and flower buds.

The protein localises to the nucleus. Functionally, involved in disease resistance response. May function as repressor of pathogenesis-related proteins. May function in the regulation of host basal defense responses against viral infection. Transcriptional activator involved in responses to wounding and infection with tobamovirus (TMV). Binds to the DNA sequences 5'-AAAATATCT-3' and 5'AGATTTTT-3' of CYP734A1/BAS1 and CYP72C1/SOB7 promoters, respectively. Acts as a suppressor of the brassinosteroid (BR)-inactivating enzymes CYP734A1/BAS1 and CYP72C1/SOB7, and prevents their expression in almost all tissues. Plays a central role in integrating BR homeostasis and seedling development. Regulates the spatial regulation of BR homeostasis and participates in the regulation of hypocotyl elongation and root growth by suppressing BR catabolism. Mediates connection between BR catabolism and photomorphogenesis. Binds to, and transactivates the promoter of the auxin biosynthetic gene NIT2. Stress-responsive NAC transcription factor involved in ABA-inducible leaf senescence signaling. Required for normal seed development and morphology. In Arabidopsis thaliana (Mouse-ear cress), this protein is Protein ATAF2 (NAC081).